The following is a 205-amino-acid chain: Small ribosomal subunit protein uS4 (205 aa).

The segment at 1 to 46 (MSKRHSAKYKIDRRMGENLWGRPKSPVNSRSYGPGQHGQRRKSKVS) is disordered. In terms of domain architecture, S4 RNA-binding spans 94–154 (SRLDAIVYRA…EKSRNMALVL (61 aa)).

It belongs to the universal ribosomal protein uS4 family. As to quaternary structure, part of the 30S ribosomal subunit. Contacts protein S5. The interaction surface between S4 and S5 is involved in control of translational fidelity.

In terms of biological role, one of the primary rRNA binding proteins, it binds directly to 16S rRNA where it nucleates assembly of the body of the 30S subunit. Its function is as follows. With S5 and S12 plays an important role in translational accuracy. The sequence is that of Small ribosomal subunit protein uS4 from Caulobacter vibrioides (strain ATCC 19089 / CIP 103742 / CB 15) (Caulobacter crescentus).